Consider the following 1004-residue polypeptide: Outer cell wall protein (1004 aa).

The signal sequence occupies residues 1 to 24; it reads MNKKVVLSVLSTTLVASVAASAFA.

As to quaternary structure, the outer cell wall layer is composed of subunits of the outer cell wall protein. These proteins form a hexagonal array with a lattice constant of 14.5 nm in the outer cell wall layers.

The protein resides in the secreted. The protein localises to the cell wall. It is found in the S-layer. The outer wall protein binds to the middle cell wall protein. The polypeptide is Outer cell wall protein (Brevibacillus brevis (strain 47 / JCM 6285 / NBRC 100599)).